A 70-amino-acid polypeptide reads, in one-letter code: UPF0426 protein ssl0294 (70 aa).

This sequence belongs to the UPF0426 family.

The polypeptide is UPF0426 protein ssl0294 (Synechocystis sp. (strain ATCC 27184 / PCC 6803 / Kazusa)).